Consider the following 112-residue polypeptide: cAMP-regulated phosphoprotein 19 (112 aa).

Over residues 1–11 (MSAESPEPASA) the composition is skewed to low complexity. Residues 1–49 (MSAESPEPASAEEQKEMEDKVLSPEKAEEAKLKARYPHLGQKPGGSDFL) are disordered. Residues 12–32 (EEQKEMEDKVLSPEKAEEAKL) are compositionally biased toward basic and acidic residues. Residues S62 and S104 each carry the phosphoserine; by GWL modification. Residues 72–112 (MKNKQLPTAAPDKTEVTGDHIPTPQDLPQRKPSLVASKLAG) form a disordered region. S104 carries the post-translational modification Phosphoserine; by PKA.

It belongs to the endosulfine family. As to quaternary structure, interacts (when phosphorylated at Ser-62) with PPP2R2D. In terms of processing, phosphorylation at Ser-62 by MASTL/GWL during mitosis is essential for interaction with PPP2R2D (PR55-delta) and subsequent inactivation of PP2A.

The protein localises to the cytoplasm. Protein phosphatase inhibitor that specifically inhibits protein phosphatase 2A (PP2A) during mitosis. Inhibition of PP2A is enhanced when ARPP19 is phosphorylated. When phosphorylated at Ser-62 during mitosis, specifically interacts with PPP2R2D (PR55-delta) and inhibits its activity, leading to inactivation of PP2A, an essential condition to keep cyclin-B1-CDK1 activity high during M phase. The protein is cAMP-regulated phosphoprotein 19 (ARPP19) of Taeniopygia guttata (Zebra finch).